The sequence spans 786 residues: Endonuclease MutS2 (786 aa).

332–339 is a binding site for ATP; sequence GPNTGGKT. A Smr domain is found at 710-785; it reads VDLRGLDAEE…GDGVTMVELK (76 aa).

The protein belongs to the DNA mismatch repair MutS family. MutS2 subfamily. As to quaternary structure, homodimer. Binds to stalled ribosomes, contacting rRNA.

Its function is as follows. Endonuclease that is involved in the suppression of homologous recombination and thus may have a key role in the control of bacterial genetic diversity. Functionally, acts as a ribosome collision sensor, splitting the ribosome into its 2 subunits. Detects stalled/collided 70S ribosomes which it binds and splits by an ATP-hydrolysis driven conformational change. Acts upstream of the ribosome quality control system (RQC), a ribosome-associated complex that mediates the extraction of incompletely synthesized nascent chains from stalled ribosomes and their subsequent degradation. Probably generates substrates for RQC. The chain is Endonuclease MutS2 from Clostridium beijerinckii (strain ATCC 51743 / NCIMB 8052) (Clostridium acetobutylicum).